Reading from the N-terminus, the 444-residue chain is MTLDLSKPATAGYLSGFANEFATEALPGALPHGRNSPQRAPYGLYAEQLSGTAFTAPRGHNRRSWLYRIRPAAVHRPFEPYAGAQRLVSEFGDSADVPPTPPNQLRWDPLPMPVEPTDFVDGLVTMAGNGSAAAMNGCAIHLYAANRSMQDRFFYSADGELLIVPQQGRLFIATEFGRLDVEPFEIAVIPRGVRFAVALPDGDARGYICENFGALLRLPDLGPIGSNGLANPRDFLTPQAAYEDREGAFELIAKLNGRLWRADIGHSPLDVVAWHGNYAPYKYDLRLFNTIGSISFDHPDPSIFLVLQAQSDTPGVDTIDFVIFPPRWLAAEDTFRPPWFHRNVASEFMGLVHGAYDAKAEGFVPGGASLHNCMSGHRPDADTFEKASVSDTTKPHKVDATMAFMFETRTLIRPTRYALDTAQLQADYFECWQGIKKHFNPEQR.

The active-site Proton acceptor is the His-298. The Fe cation site is built by His-341 and Glu-347. Residues Tyr-356 and His-377 each contribute to the homogentisate site. Position 377 (His-377) interacts with Fe cation.

The protein belongs to the homogentisate dioxygenase family. As to quaternary structure, hexamer; dimer of trimers. It depends on Fe cation as a cofactor.

It carries out the reaction homogentisate + O2 = 4-maleylacetoacetate + H(+). It participates in amino-acid degradation; L-phenylalanine degradation; acetoacetate and fumarate from L-phenylalanine: step 4/6. Involved in the catabolism of homogentisate (2,5-dihydroxyphenylacetate or 2,5-OH-PhAc), a central intermediate in the degradation of phenylalanine and tyrosine. Catalyzes the oxidative ring cleavage of the aromatic ring of homogentisate to yield maleylacetoacetate. The sequence is that of Homogentisate 1,2-dioxygenase from Burkholderia cenocepacia (strain ATCC BAA-245 / DSM 16553 / LMG 16656 / NCTC 13227 / J2315 / CF5610) (Burkholderia cepacia (strain J2315)).